The following is a 188-amino-acid chain: Archaemetzincin (188 aa).

Histidine 137 is a Zn(2+) binding site. The active-site Proton acceptor is glutamate 138. Residues histidine 141, histidine 147, cysteine 148, cysteine 153, cysteine 172, and cysteine 175 each coordinate Zn(2+).

This sequence belongs to the peptidase M54 family. Monomer. The cofactor is Zn(2+).

Functionally, probable zinc metalloprotease whose natural substrate is unknown. The sequence is that of Archaemetzincin from Pyrococcus abyssi (strain GE5 / Orsay).